Consider the following 373-residue polypeptide: Lipoyl amidotransferase LIPT1, mitochondrial (373 aa).

The N-terminal 25 residues, 1–25, are a transit peptide targeting the mitochondrion; that stretch reads MLIPFSMKNCFQLLCNCQVPAAGFK. A BPL/LPL catalytic domain is found at 57–243; sequence LEGKPILFFW…EYAAYHQIDN (187 aa). (R)-lipoyl-5'-AMP-binding residues include tyrosine 107, arginine 151, lysine 161, and threonine 179.

This sequence belongs to the LplA family. Highly expressed in skeletal muscle and heart, moderately in kidney and pancreas, and detected at lower levels in liver, brain, placenta and lung.

The protein resides in the mitochondrion. It catalyses the reaction N(6)-[(R)-lipoyl]-L-lysyl-[glycine-cleavage complex H protein] + L-lysyl-[lipoyl-carrier protein] = L-lysyl-[glycine-cleavage complex H protein] + N(6)-[(R)-lipoyl]-L-lysyl-[lipoyl-carrier protein]. It carries out the reaction (R)-lipoyl-5'-AMP + L-lysyl-[lipoyl-carrier protein] = N(6)-[(R)-lipoyl]-L-lysyl-[lipoyl-carrier protein] + AMP + 2 H(+). It participates in protein modification; protein lipoylation via exogenous pathway; protein N(6)-(lipoyl)lysine from lipoate: step 2/2. Lipoyl amidotransferase that catalyzes the transfer of lipoyl moieties from lipoyl-protein H of the glycine cleavage system (lipoyl-GCSH) to E2 subunits of the pyruvate dehydrogenase complex (PDCE2). Unable to catalyze the transfer of octanoyl from octanoyl-GCSH to PDCE2. In vitro, it is also able to catalyze the transfer of the lipoyl group from lipoyl-AMP to the specific lysine residue of lipoyl domains of lipoate-dependent enzymes but this reaction may not be physiologically relevant. This is Lipoyl amidotransferase LIPT1, mitochondrial from Homo sapiens (Human).